The sequence spans 1067 residues: Kinesin-like protein KIF11 (1067 aa).

Residues 18 to 359 (NIQVVVRCRP…LEYANRAKNI (342 aa)) enclose the Kinesin motor domain. 105–112 (GQTGTGKT) provides a ligand contact to ATP. Positions 365–480 (VNQKLTKRAL…SKEQLAQEAF (116 aa)) form a coiled coil. Phosphothreonine; by CDK1 is present on Thr-937. The residue at position 1046 (Ser-1046) is a Phosphoserine; by NEK6. The segment at 1048 to 1067 (IMDEAEQSLPKSKLPLRMQN) is disordered.

This sequence belongs to the TRAFAC class myosin-kinesin ATPase superfamily. Kinesin family. BimC subfamily. As to quaternary structure, heterotetramer of two heavy and two light chains. Interacts with aurka. Phosphorylation of Thr-937 during mitosis controls the association of this protein with the spindle apparatus. In terms of processing, a subset of this protein primarily localized at the spindle pole is phosphorylated by NEK6 during mitosis. Post-translationally, phosphorylated on a serine residue by aurka.

The protein localises to the cytoplasm. Its subcellular location is the cytoskeleton. The protein resides in the spindle pole. Its function is as follows. Plus end-directed motor protein required for establishing a bipolar spindle. Associates with both interphase and mitotic spindle microtubules. May be involved in nuclear divisions taking place during the development of unfertilized eggs. Required in non-mitotic cells for transport of secretory proteins from the Golgi complex to the cell surface. The chain is Kinesin-like protein KIF11 from Xenopus tropicalis (Western clawed frog).